Here is a 75-residue protein sequence, read N- to C-terminus: Venom serine protease inhibitor BiVSPI (75 aa).

The first 20 residues, 1-20 (MSRILFVFLAVMAIFSTSFG), serve as a signal peptide directing secretion. 5 disulfides stabilise this stretch: Cys-23/Cys-55, Cys-32/Cys-51, Cys-35/Cys-47, Cys-39/Cys-75, and Cys-57/Cys-69. Residues 23–75 (CGLNEEFKSCGSCEPTCAKPRVTICTMECKIGCQCKSGYLRNGEGTCVLPEKC) enclose the TIL domain.

This sequence belongs to the serine protease inhibitor-like (TIL domain-containing) family. Post-translationally, may be O-glycosylated. As to expression, expressed by the venom gland (at protein level) and expressed in fat body.

It is found in the secreted. Its subcellular location is the target cell membrane. In terms of biological role, antimicrobial venom serine protease inhibitor. Exhibits inhibitory activity against chymotrypsin (IC(50)=19.56 nM, Ki=15.24 nM) and microbial serine proteases, such as subtilisin A (IC(50)=6.57 nM, Ki=6.83 nM) and proteinase K (IC(50)=7.11 nM, Ki=7.02 nM). Has not activity against trypsin, plasmin, tPA, thrombin, factor Xa or elastase. Binds and inhibits Gram-positive bacteria (B.subtilis (MIC=29.45 uM), B.thuringiensis (MIC=91.03 uM)) and the entomopathogenic fungus B.bassiana (MIC=30.09 uM) but not to E.coli. The polypeptide is Venom serine protease inhibitor BiVSPI (Bombus ignitus (Bumblebee)).